A 406-amino-acid polypeptide reads, in one-letter code: Cysteine desulfurase (406 aa).

At Lys226 the chain carries N6-(pyridoxal phosphate)lysine. Cys364 serves as the catalytic Cysteine persulfide intermediate.

Belongs to the class-V pyridoxal-phosphate-dependent aminotransferase family. Csd subfamily. Homodimer. Interacts with SufE and the SufBCD complex composed of SufB, SufC and SufD. The interaction with SufE is required to mediate the direct transfer of the sulfur atom from the S-sulfanylcysteine. It depends on pyridoxal 5'-phosphate as a cofactor.

It localises to the cytoplasm. It catalyses the reaction (sulfur carrier)-H + L-cysteine = (sulfur carrier)-SH + L-alanine. The enzyme catalyses L-selenocysteine + AH2 = hydrogenselenide + L-alanine + A + H(+). It participates in cofactor biosynthesis; iron-sulfur cluster biosynthesis. Cysteine desulfurases mobilize the sulfur from L-cysteine to yield L-alanine, an essential step in sulfur metabolism for biosynthesis of a variety of sulfur-containing biomolecules. Component of the suf operon, which is activated and required under specific conditions such as oxidative stress and iron limitation. Acts as a potent selenocysteine lyase in vitro, that mobilizes selenium from L-selenocysteine. Selenocysteine lyase activity is however unsure in vivo. The chain is Cysteine desulfurase from Shigella sonnei (strain Ss046).